The following is a 613-amino-acid chain: Serine protease FAM111A (613 aa).

Residues 1 to 72 (MSCKKRKSQI…TRQDQTPPLN (72 aa)) form a disordered region. Lys-19 is covalently cross-linked (Glycyl lysine isopeptide (Lys-Gly) (interchain with G-Cter in SUMO2)). Ser-25 is modified (phosphoserine). A Glycyl lysine isopeptide (Lys-Gly) (interchain with G-Cter in SUMO2) cross-link involves residue Lys-29. Residues 40 to 56 (VDSKKMPRDITNTRDQR) show a composition bias toward basic and acidic residues. Lys-62 participates in a covalent cross-link: Glycyl lysine isopeptide (Lys-Gly) (interchain with G-Cter in SUMO2). Residues His-383, Asp-437, and Ser-543 each act as charge relay system in the active site.

This sequence belongs to the FAM111 family. In terms of assembly, interacts (via PIP-box) with PCNA; this interaction is direct. Post-translationally, autocatalytically cleaved; autocatalytic cleavage takes place in trans.

The protein localises to the nucleus. It is found in the chromosome. The protein resides in the cytoplasm. Functionally, single-stranded DNA-binding serine protease that mediates the proteolytic cleavage of covalent DNA-protein cross-links (DPCs) during DNA synthesis, thereby playing a key role in maintaining genomic integrity. DPCs are highly toxic DNA lesions that interfere with essential chromatin transactions, such as replication and transcription, and which are induced by reactive agents, such as UV light or formaldehyde. Protects replication fork from stalling by removing DPCs, such as covalently trapped topoisomerase 1 (TOP1) adducts on DNA lesion, or poly(ADP-ribose) polymerase 1 (PARP1)-DNA complexes trapped by PARP inhibitors. Required for PCNA loading on replication sites. Promotes S-phase entry and DNA synthesis. This Mus musculus (Mouse) protein is Serine protease FAM111A.